Here is a 490-residue protein sequence, read N- to C-terminus: Aspartyl/glutamyl-tRNA(Asn/Gln) amidotransferase subunit B (490 aa).

The protein belongs to the GatB/GatE family. GatB subfamily. In terms of assembly, heterotrimer of A, B and C subunits.

The catalysed reaction is L-glutamyl-tRNA(Gln) + L-glutamine + ATP + H2O = L-glutaminyl-tRNA(Gln) + L-glutamate + ADP + phosphate + H(+). It catalyses the reaction L-aspartyl-tRNA(Asn) + L-glutamine + ATP + H2O = L-asparaginyl-tRNA(Asn) + L-glutamate + ADP + phosphate + 2 H(+). Allows the formation of correctly charged Asn-tRNA(Asn) or Gln-tRNA(Gln) through the transamidation of misacylated Asp-tRNA(Asn) or Glu-tRNA(Gln) in organisms which lack either or both of asparaginyl-tRNA or glutaminyl-tRNA synthetases. The reaction takes place in the presence of glutamine and ATP through an activated phospho-Asp-tRNA(Asn) or phospho-Glu-tRNA(Gln). This is Aspartyl/glutamyl-tRNA(Asn/Gln) amidotransferase subunit B from Synechococcus sp. (strain JA-2-3B'a(2-13)) (Cyanobacteria bacterium Yellowstone B-Prime).